The primary structure comprises 200 residues: Small heat shock protein hspG2 (200 aa).

The sHSP domain maps to 33–200; that stretch reads NKRIDIIPSM…DNFQIKLKSI (168 aa). The tract at residues 86–139 is disordered; sequence KLQQQQQQQSEKSSQSTNNKDDDEPSIEEYEDDTKLKSNLNKNTENKDENKTTS. Residues 88 to 101 show a composition bias toward low complexity; that stretch reads QQQQQQQSEKSSQS. A compositionally biased stretch (acidic residues) spans 106–117; sequence DDDEPSIEEYED.

Belongs to the small heat shock protein (HSP20) family.

This is Small heat shock protein hspG2 (hspG2) from Dictyostelium discoideum (Social amoeba).